The chain runs to 501 residues: L-ornithine N(5)-monooxygenase (501 aa).

The segment covering 1–16 (MNGTSTTGNGFTNGTN) has biased composition (low complexity). The tract at residues 1–40 (MNGTSTTGNGFTNGTNYPVPKLELQPETTSTSPTRAQTHP) is disordered. Positions 26–37 (PETTSTSPTRAQ) are enriched in polar residues. Residues 92–100 (EKQSNFAWH) and Gln111 each bind FAD. Lys116 contacts substrate. Residue Val177 coordinates FAD. Residue 263 to 266 (SGQS) participates in NADP(+) binding. Substrate contacts are provided by residues 304-307 (NELF) and Asn334. 334–336 (NYS) lines the NADP(+) pocket. FAD is bound at residue 476–478 (SLL). Substrate is bound at residue Ser479.

It belongs to the lysine N(6)-hydroxylase/L-ornithine N(5)-oxygenase family. As to quaternary structure, homotetramer. The cofactor is FAD.

It carries out the reaction L-ornithine + NADPH + O2 = N(5)-hydroxy-L-ornithine + NADP(+) + H2O. It catalyses the reaction L-ornithine + NADH + O2 = N(5)-hydroxy-L-ornithine + NAD(+) + H2O. Its pathway is siderophore biosynthesis. Its function is as follows. L-ornithine N(5)-monooxygenase; part of the siderophore biosynthetic pathway. Arthroderma benhamiae produces 2 types of extracellular siderophores, ferrichrome C and ferricrocin. The biosynthesis of these siderophores depends on the hydroxylation of ornithine to N(5)-hydroxyornithine, catalyzed by the monooxygenase sidA. The structure of ferricrocin differs from ferrichrome C only by a serine for alanine substitution and the assembly of both siderophores is suggested to be performed by the nonribosomal peptide synthase (NRPS) sidC. The protein is L-ornithine N(5)-monooxygenase of Arthroderma benhamiae (strain ATCC MYA-4681 / CBS 112371) (Trichophyton mentagrophytes).